We begin with the raw amino-acid sequence, 112 residues long: uncharacterized protein (112 aa).

Residues 91–112 are disordered; sequence ENQRKKGTRKRRSSEVDSKEKS. Over residues 103–112 the composition is skewed to basic and acidic residues; the sequence is SSEVDSKEKS.

This is an uncharacterized protein from Caenorhabditis elegans.